The chain runs to 465 residues: Adenosylhomocysteinase (465 aa).

Substrate-binding residues include threonine 56, aspartate 131, and glutamate 191. 192–194 (TTT) contacts NAD(+). Positions 221 and 225 each coordinate substrate. Residues asparagine 226, 255–260 (GYGDVG), glutamate 278, asparagine 313, 334–336 (IGH), and asparagine 379 each bind NAD(+).

It belongs to the adenosylhomocysteinase family. NAD(+) serves as cofactor.

The protein resides in the cytoplasm. It carries out the reaction S-adenosyl-L-homocysteine + H2O = L-homocysteine + adenosine. It participates in amino-acid biosynthesis; L-homocysteine biosynthesis; L-homocysteine from S-adenosyl-L-homocysteine: step 1/1. Its function is as follows. May play a key role in the regulation of the intracellular concentration of adenosylhomocysteine. This Bartonella henselae (strain ATCC 49882 / DSM 28221 / CCUG 30454 / Houston 1) (Rochalimaea henselae) protein is Adenosylhomocysteinase.